Reading from the N-terminus, the 227-residue chain is Putative ankyrin repeat protein RF_0314 (227 aa).

ANK repeat units follow at residues 94–126 (NGCT…DPNI), 130–164 (DGNT…DIEL), and 168–199 (LGWT…DNDF).

This chain is Putative ankyrin repeat protein RF_0314, found in Rickettsia felis (strain ATCC VR-1525 / URRWXCal2) (Rickettsia azadi).